A 238-amino-acid polypeptide reads, in one-letter code: Sugar fermentation stimulation protein homolog (238 aa).

This sequence belongs to the SfsA family.

This Actinobacillus succinogenes (strain ATCC 55618 / DSM 22257 / CCUG 43843 / 130Z) protein is Sugar fermentation stimulation protein homolog.